Here is a 256-residue protein sequence, read N- to C-terminus: Imidazole glycerol phosphate synthase subunit HisF (256 aa).

Active-site residues include D12 and D131.

This sequence belongs to the HisA/HisF family. As to quaternary structure, heterodimer of HisH and HisF.

It localises to the cytoplasm. The enzyme catalyses 5-[(5-phospho-1-deoxy-D-ribulos-1-ylimino)methylamino]-1-(5-phospho-beta-D-ribosyl)imidazole-4-carboxamide + L-glutamine = D-erythro-1-(imidazol-4-yl)glycerol 3-phosphate + 5-amino-1-(5-phospho-beta-D-ribosyl)imidazole-4-carboxamide + L-glutamate + H(+). The protein operates within amino-acid biosynthesis; L-histidine biosynthesis; L-histidine from 5-phospho-alpha-D-ribose 1-diphosphate: step 5/9. Its function is as follows. IGPS catalyzes the conversion of PRFAR and glutamine to IGP, AICAR and glutamate. The HisF subunit catalyzes the cyclization activity that produces IGP and AICAR from PRFAR using the ammonia provided by the HisH subunit. The protein is Imidazole glycerol phosphate synthase subunit HisF of Beutenbergia cavernae (strain ATCC BAA-8 / DSM 12333 / CCUG 43141 / JCM 11478 / NBRC 16432 / NCIMB 13614 / HKI 0122).